Consider the following 111-residue polypeptide: Small ribosomal subunit protein bS6 (111 aa).

Belongs to the bacterial ribosomal protein bS6 family.

Its function is as follows. Binds together with bS18 to 16S ribosomal RNA. This chain is Small ribosomal subunit protein bS6, found in Francisella tularensis subsp. tularensis (strain FSC 198).